Reading from the N-terminus, the 284-residue chain is MTAQIIDGKAIAQSIRTKLSEKVTARKEAGQRIPGLAVVLVGADPASQVYVGSKRKACEEVGFISRSYDLETSCSEDELLSLIDSLNDDPTIDGILVQLPLPAHIEDSKVIERIRPDKDVDGFHPYNVGRLAQRIPVLRSCTPMGIMTLIKSTGVDTYGLDAVVVGASNIVGRPMTLELLLAGCTTTTCHRFTKNLEQKIRIADLVVVAVGKPGFIPGEWIKPGAIVIDVGINRLDNGTLVGDVQYDVAAQNASFITPVPGGVGPMTIASLLENTLYAAEQYHD.

Residues 166–168 (GAS) and isoleucine 232 each bind NADP(+).

This sequence belongs to the tetrahydrofolate dehydrogenase/cyclohydrolase family. As to quaternary structure, homodimer.

The enzyme catalyses (6R)-5,10-methylene-5,6,7,8-tetrahydrofolate + NADP(+) = (6R)-5,10-methenyltetrahydrofolate + NADPH. It carries out the reaction (6R)-5,10-methenyltetrahydrofolate + H2O = (6R)-10-formyltetrahydrofolate + H(+). The protein operates within one-carbon metabolism; tetrahydrofolate interconversion. Functionally, catalyzes the oxidation of 5,10-methylenetetrahydrofolate to 5,10-methenyltetrahydrofolate and then the hydrolysis of 5,10-methenyltetrahydrofolate to 10-formyltetrahydrofolate. The polypeptide is Bifunctional protein FolD (Shewanella baltica (strain OS223)).